Here is a 393-residue protein sequence, read N- to C-terminus: S-adenosylmethionine synthase (393 aa).

Residue H17 participates in ATP binding. D19 lines the Mg(2+) pocket. E45 serves as a coordination point for K(+). Residues E58 and Q104 each coordinate L-methionine. Residues 104 to 114 are flexible loop; that stretch reads QSAEIAQGVEE. Residues 171–173, D245, 251–252, A268, and K272 contribute to the ATP site; these read DAK and RK. D245 provides a ligand contact to L-methionine. Residue K276 participates in L-methionine binding.

This sequence belongs to the AdoMet synthase family. Homotetramer; dimer of dimers. It depends on Mg(2+) as a cofactor. Requires K(+) as cofactor.

The protein localises to the cytoplasm. It carries out the reaction L-methionine + ATP + H2O = S-adenosyl-L-methionine + phosphate + diphosphate. It participates in amino-acid biosynthesis; S-adenosyl-L-methionine biosynthesis; S-adenosyl-L-methionine from L-methionine: step 1/1. Catalyzes the formation of S-adenosylmethionine (AdoMet) from methionine and ATP. The overall synthetic reaction is composed of two sequential steps, AdoMet formation and the subsequent tripolyphosphate hydrolysis which occurs prior to release of AdoMet from the enzyme. This is S-adenosylmethionine synthase from Hyphomonas neptunium (strain ATCC 15444).